A 479-amino-acid polypeptide reads, in one-letter code: Calcium/calmodulin-dependent protein kinase type II delta chain (479 aa).

Residues 14-272 enclose the Protein kinase domain; that stretch reads YQLFEELGKG…ASEALKHPWI (259 aa). Residues 20–28 and K43 each bind ATP; that span reads LGKGAFSVV. D136 functions as the Proton acceptor in the catalytic mechanism. T287 carries the post-translational modification Phosphothreonine. Residues S315 and S319 each carry the phosphoserine modification. T337 carries the post-translational modification Phosphothreonine.

It belongs to the protein kinase superfamily. CAMK Ser/Thr protein kinase family. CaMK subfamily. CAMK2 is composed of four different chains: alpha, beta, gamma, and delta. The different isoforms assemble into homo- or heteromultimeric holoenzymes composed of 8 to 12 subunits.

It carries out the reaction L-seryl-[protein] + ATP = O-phospho-L-seryl-[protein] + ADP + H(+). It catalyses the reaction L-threonyl-[protein] + ATP = O-phospho-L-threonyl-[protein] + ADP + H(+). Its activity is regulated as follows. Autophosphorylation of CAMK2 plays an important role in the regulation of the kinase activity. Functionally, caM-kinase II (CAMK2) is a prominent kinase in the central nervous system. The polypeptide is Calcium/calmodulin-dependent protein kinase type II delta chain (CAMK2D) (Gallus gallus (Chicken)).